A 535-amino-acid chain; its full sequence is MATLPILDLWSTNKALVSLTISASLLLVSLLVSLFQVGRRERGLPPGPPTRLVLGNEHEIPKADSHFLMSKWAKQYGGIFSLKRFRNTTIVLTDWKIMKELVDKKSTNFSHRPPSKVADLITRGNHILMMQYGETWRTMRKLIHQYLMESQCEKEHWKVQEAEAAQMLHDFLVDPENHMKHPKRYSNSITMSLVFGIRAKSVNDEYMTRLYSLMEKWSLVLETGATPPVDSWPLLQWIPERFMGYWRRRATEVGDLMTGLYTEVLHVIENRRKAGIYKDSLMDRVLDKKDKYRFDEHQLAFLGGTLMEGGSDTSSSLILAIVQAMTQYPEVQKKAHAEIDSVIGTDRSPAWSDFRKLPYINMMIKEAHRWRPVLPLGVVHGLATDDSYNGMHLPKHSTVILNVWGMHMDPDRFENPDAFIPERYANFPELAPHYAALADGAARDHFGYGAGRRICPGIHLAERNLFIAVAKLLWAFEFKNNPAGKNDASAETGSSQGFMHCVKDYDAIVTVRGEERRQTILRELEQAQTVFAKYD.

Cysteine 455 contributes to the heme binding site.

Belongs to the cytochrome P450 family. The cofactor is heme.

The enzyme catalyses 3-methylcatechol + AH2 + O2 = 3-methylbenzene-1,2,4-triol + A + H2O. It participates in secondary metabolite biosynthesis. Its function is as follows. Cytochrome P450 monooxygenase; part of the gene cluster that mediates the biosynthesis of terreic acid, a quinone epoxide inhibitor of Bruton's tyrosine kinase. The first step of the pathway is the synthesis of 6-methylsalicylic acid (6-MSA) by the 6-methylsalicylic acid synthase atX. In the biosynthesis of 6-MSA, atX utilizes one acetyl-CoA and three malonyl-CoAs as its substrates and catalyzes a series of programmed reactions including Claisen condensation, reduction, aldol cyclization, and the hydrolytic cleavage that yields 6-MSA. The 6-methylsalicylate 1-monooxygenase atA then catalyzes the decarboxylative hydroxylation of 6-MSA to 3-methylcatechol. The next step is the conversion of 3-methylcatechol to 3-methyl-1,2,4-benzenetriol by cytochrome P450 monooxygenase atE, which is enhanced by cytochrome P450 monooxygenase atG. Then, the epoxidase atD catalyzes the epoxidation and hydroxyl oxidation of 3-methyl-1,2,4-benzenetriol to terremutin. Lastly, GMC oxidoreductase atC oxidizes terremutin to terreic acid. The sequence is that of Cytochrome P450 monooxygenase atE from Aspergillus terreus (strain NIH 2624 / FGSC A1156).